A 129-amino-acid chain; its full sequence is MNWLDELKWDSQGLMPAIAQEQGSNDVLMLAWMNREALQKTAELGRAVYFSRSRNKLWFKGEESGHVQIVHEIRIDCDQDVILLKVTQTGHTPGIACHTGRHSCFYRVYENGEWKVTDPVLKDPQTIYK.

A Mg(2+)-binding site is contributed by aspartate 76. A Zn(2+)-binding site is contributed by cysteine 77. Residues aspartate 78 and aspartate 80 each contribute to the Mg(2+) site. Residues cysteine 97 and cysteine 104 each coordinate Zn(2+).

Belongs to the PRA-CH family. In terms of assembly, homodimer. Mg(2+) serves as cofactor. Requires Zn(2+) as cofactor.

It localises to the cytoplasm. It catalyses the reaction 1-(5-phospho-beta-D-ribosyl)-5'-AMP + H2O = 1-(5-phospho-beta-D-ribosyl)-5-[(5-phospho-beta-D-ribosylamino)methylideneamino]imidazole-4-carboxamide. It functions in the pathway amino-acid biosynthesis; L-histidine biosynthesis; L-histidine from 5-phospho-alpha-D-ribose 1-diphosphate: step 3/9. Catalyzes the hydrolysis of the adenine ring of phosphoribosyl-AMP. This chain is Phosphoribosyl-AMP cyclohydrolase, found in Albidiferax ferrireducens (strain ATCC BAA-621 / DSM 15236 / T118) (Rhodoferax ferrireducens).